Consider the following 90-residue polypeptide: Protein AF1q (90 aa).

The Nuclear export signal signature appears at 24–32 (LSELEGLGL). Ser84 is modified (phosphoserine).

Belongs to the MLLT11 family. Interacts with HSPA8 and LAMP2 isoform A; the interaction may target MLLT11 for degradation via chaperone-mediated autophagy. Interacts with TCF7. In terms of processing, ubiquitinated, leading to degradation. In terms of tissue distribution, expressed in myoepithelial cells of normal breast tissue (at protein level). Highly expressed in thymus. Expressed in colon, small intestine, prostate and ovary. Not detected in peripheral blood lymphocytes and spleen.

It localises to the nucleus. Its subcellular location is the cytoplasm. The protein localises to the cytoskeleton. It is found in the microtubule organizing center. The protein resides in the centrosome. Functionally, cofactor for the transcription factor TCF7. Involved in regulation of lymphoid development by driving multipotent hematopoietic progenitor cells towards a T cell fate. This Homo sapiens (Human) protein is Protein AF1q (MLLT11).